We begin with the raw amino-acid sequence, 156 residues long: Adult-specific rigid cuticular protein 15.5 (156 aa).

The region spanning 23–84 is the Chitin-binding type R&amp;R domain; that stretch reads IGNYAFNYGT…SVKTNEPGTA (62 aa).

In terms of biological role, component of the rigid cuticle of the spider. In Araneus diadematus (European garden spider), this protein is Adult-specific rigid cuticular protein 15.5.